The chain runs to 162 residues: Transcription elongation factor GreA (162 aa).

Residues 1–28 (MQKEPMLEETYRKLSEELEQLKSVERGV) are a coiled coil.

This sequence belongs to the GreA/GreB family.

Necessary for efficient RNA polymerase transcription elongation past template-encoded arresting sites. The arresting sites in DNA have the property of trapping a certain fraction of elongating RNA polymerases that pass through, resulting in locked ternary complexes. Cleavage of the nascent transcript by cleavage factors such as GreA or GreB allows the resumption of elongation from the new 3'terminus. GreA releases sequences of 2 to 3 nucleotides. The polypeptide is Transcription elongation factor GreA (Sulfurovum sp. (strain NBC37-1)).